The chain runs to 833 residues: DNA gyrase subunit A (833 aa).

The Topo IIA-type catalytic domain maps to 34-500 (LPDVRDGLKP…AGDVRDIEDI (467 aa)). The O-(5'-phospho-DNA)-tyrosine intermediate role is filled by Y122. Positions 527–533 (QKRGGQG) match the GyrA-box motif.

It belongs to the type II topoisomerase GyrA/ParC subunit family. As to quaternary structure, heterotetramer, composed of two GyrA and two GyrB chains. In the heterotetramer, GyrA contains the active site tyrosine that forms a transient covalent intermediate with DNA, while GyrB binds cofactors and catalyzes ATP hydrolysis.

Its subcellular location is the cytoplasm. It carries out the reaction ATP-dependent breakage, passage and rejoining of double-stranded DNA.. A type II topoisomerase that negatively supercoils closed circular double-stranded (ds) DNA in an ATP-dependent manner to modulate DNA topology and maintain chromosomes in an underwound state. Negative supercoiling favors strand separation, and DNA replication, transcription, recombination and repair, all of which involve strand separation. Also able to catalyze the interconversion of other topological isomers of dsDNA rings, including catenanes and knotted rings. Type II topoisomerases break and join 2 DNA strands simultaneously in an ATP-dependent manner. The protein is DNA gyrase subunit A of Chlamydia muridarum (strain MoPn / Nigg).